The primary structure comprises 88 residues: Cell division topological specificity factor (88 aa).

This sequence belongs to the MinE family.

In terms of biological role, prevents the cell division inhibition by proteins MinC and MinD at internal division sites while permitting inhibition at polar sites. This ensures cell division at the proper site by restricting the formation of a division septum at the midpoint of the long axis of the cell. This chain is Cell division topological specificity factor, found in Escherichia coli (strain SMS-3-5 / SECEC).